The primary structure comprises 1120 residues: Isoleucine--tRNA ligase (1120 aa).

A 'HIGH' region motif is present at residues 64-74 (PFANGLPHYGH). The 'KMSKS' region motif lies at 647–651 (KLSKR). Residue Lys-650 coordinates ATP.

The protein belongs to the class-I aminoacyl-tRNA synthetase family. IleS type 2 subfamily. As to quaternary structure, monomer. It depends on Zn(2+) as a cofactor.

It localises to the cytoplasm. The enzyme catalyses tRNA(Ile) + L-isoleucine + ATP = L-isoleucyl-tRNA(Ile) + AMP + diphosphate. Catalyzes the attachment of isoleucine to tRNA(Ile). As IleRS can inadvertently accommodate and process structurally similar amino acids such as valine, to avoid such errors it has two additional distinct tRNA(Ile)-dependent editing activities. One activity is designated as 'pretransfer' editing and involves the hydrolysis of activated Val-AMP. The other activity is designated 'posttransfer' editing and involves deacylation of mischarged Val-tRNA(Ile). This is Isoleucine--tRNA ligase from Ehrlichia canis (strain Jake).